A 486-amino-acid polypeptide reads, in one-letter code: Zinc transporter 6 (486 aa).

Topologically, residues 1–60 are cytoplasmic; that stretch reads MVALDVLGITDSDAPVYRQKQEADTLVLGTIHPFRKAHRSVLGKLAQEFRLVTSDRRSWK. Residues 61-81 form a helical membrane-spanning segment; the sequence is ILLFGVLNVVCTGCLLMWCSS. The Extracellular segment spans residues 82–91; sequence TNSMALTAYT. The chain crosses the membrane as a helical span at residues 92 to 112; sequence YLTIFDLFSLITCLLSLWVTM. The Cytoplasmic portion of the chain corresponds to 113-125; that stretch reads KKPSQIYSFGFQR. A helical transmembrane segment spans residues 126–146; sequence FEVLAVFSSTVLVQLGSLFIL. At 147–161 the chain is on the extracellular side; sequence KESVERFVEQPEVHT. The helical transmembrane segment at 162–182 threads the bilayer; the sequence is GRLLVGTFVALFFNLLTLLSV. At 183-227 the chain is on the cytoplasmic side; the sequence is KNKPFVFVSEAASTSWLQEHVADLSRSLCGLIPALSSFLLPRMNP. The chain crosses the membrane as a helical span at residues 228-248; it reads FVLINLAGAFALGITYMLIEI. Residues 249–255 lie on the Extracellular side of the membrane; that stretch reads NNYNAMD. Residues 256–276 traverse the membrane as a helical segment; that stretch reads TASAVAIALMTFGTMYPMSVY. The Cytoplasmic segment spans residues 277–486; that stretch reads SGKVLLQTTP…SGTYTGPPRP (210 aa). The span at 394 to 411 shows a compositional bias: low complexity; sequence PSRAQGSEPTPATSTPAK. The interval 394 to 425 is disordered; sequence PSRAQGSEPTPATSTPAKPSSPPPEFSFHTPG.

Belongs to the cation diffusion facilitator (CDF) transporter (TC 2.A.4) family. SLC30A subfamily. As to quaternary structure, heterodimer with SLC30A5; form a functional zinc ion transmembrane transporter.

The protein resides in the golgi apparatus. Its subcellular location is the trans-Golgi network membrane. Its function is as follows. Has probably no intrinsic transporter activity but together with SLC30A5 forms a functional zinc ion:proton antiporter heterodimer, mediating zinc entry into the lumen of organelles along the secretory pathway. As part of that zinc ion:proton antiporter, contributes to zinc ion homeostasis within the early secretory pathway and regulates the activation and folding of enzymes like alkaline phosphatases and enzymes involved in phosphatidylinositol glycan anchor biosynthesis. This chain is Zinc transporter 6 (slc30a6), found in Danio rerio (Zebrafish).